Consider the following 438-residue polypeptide: GDP-mannose 6-dehydrogenase (438 aa).

6 residues coordinate NAD(+): Tyr10, Val11, Asp30, Lys35, Thr86, and Thr124. Residues Glu161, Lys210, Asn214, His217, Asn225, Tyr256, Tyr257, Arg259, Phe262, and Gly265 each coordinate GDP-alpha-D-mannuronate. Cys268 is a catalytic residue. Lys271 lines the NAD(+) pocket. Lys324 contacts GDP-alpha-D-mannuronate. Arg331 contacts NAD(+).

This sequence belongs to the UDP-glucose/GDP-mannose dehydrogenase family.

It catalyses the reaction GDP-alpha-D-mannose + 2 NAD(+) + H2O = GDP-alpha-D-mannuronate + 2 NADH + 3 H(+). It functions in the pathway glycan biosynthesis; alginate biosynthesis. Catalyzes the oxidation of guanosine diphospho-D-mannose (GDP-D-mannose) to GDP-D-mannuronic acid, a precursor for alginate polymerization. The alginate layer causes a mucoid phenotype and provides a protective barrier against host immune defenses and antibiotics. This Pseudomonas savastanoi pv. phaseolicola (Pseudomonas syringae pv. phaseolicola) protein is GDP-mannose 6-dehydrogenase (algD).